Here is a 355-residue protein sequence, read N- to C-terminus: Phosphate acyltransferase (355 aa).

The protein belongs to the PlsX family. Homodimer. Probably interacts with PlsY.

It is found in the cytoplasm. The enzyme catalyses a fatty acyl-[ACP] + phosphate = an acyl phosphate + holo-[ACP]. It participates in lipid metabolism; phospholipid metabolism. Functionally, catalyzes the reversible formation of acyl-phosphate (acyl-PO(4)) from acyl-[acyl-carrier-protein] (acyl-ACP). This enzyme utilizes acyl-ACP as fatty acyl donor, but not acyl-CoA. The protein is Phosphate acyltransferase of Rhodospirillum centenum (strain ATCC 51521 / SW).